The sequence spans 349 residues: Ion-translocating oxidoreductase complex subunit D (349 aa).

Helical transmembrane passes span 37–57 (AFFG…ALSA), 73–90 (LSDN…VAIP), and 124–144 (AMAA…TWIA). Thr185 bears the FMN phosphoryl threonine mark. The next 5 helical transmembrane spans lie at 212 to 232 (ATGV…LVLL), 239 to 259 (WHIS…GFLL), 265 to 285 (GSPL…FIAT), 291 to 311 (ATSP…VYII), and 315 to 335 (GGYP…APFI).

It belongs to the NqrB/RnfD family. The complex is composed of six subunits: RnfA, RnfB, RnfC, RnfD, RnfE and RnfG. FMN is required as a cofactor.

It localises to the cell inner membrane. Its function is as follows. Part of a membrane-bound complex that couples electron transfer with translocation of ions across the membrane. This Shewanella sp. (strain W3-18-1) protein is Ion-translocating oxidoreductase complex subunit D.